The sequence spans 282 residues: Shikimate dehydrogenase (NADP(+)) (282 aa).

Shikimate-binding positions include 15–17 (SKS) and Thr-62. The active-site Proton acceptor is Lys-66. Shikimate is bound by residues Asn-87 and Asp-103. Residues 127–131 (GAGGA), 151–156 (NRTHTK), and Met-220 contribute to the NADP(+) site. Tyr-222 serves as a coordination point for shikimate. Gly-244 is an NADP(+) binding site.

It belongs to the shikimate dehydrogenase family. As to quaternary structure, homodimer.

The catalysed reaction is shikimate + NADP(+) = 3-dehydroshikimate + NADPH + H(+). It functions in the pathway metabolic intermediate biosynthesis; chorismate biosynthesis; chorismate from D-erythrose 4-phosphate and phosphoenolpyruvate: step 4/7. In terms of biological role, involved in the biosynthesis of the chorismate, which leads to the biosynthesis of aromatic amino acids. Catalyzes the reversible NADPH linked reduction of 3-dehydroshikimate (DHSA) to yield shikimate (SA). This Shewanella baltica (strain OS155 / ATCC BAA-1091) protein is Shikimate dehydrogenase (NADP(+)).